A 157-amino-acid chain; its full sequence is Pyruvoyl-dependent arginine decarboxylase 1 (157 aa).

At S41 the chain carries Pyruvic acid (Ser).

The protein belongs to the PdaD family. Pyruvate serves as cofactor.

It catalyses the reaction L-arginine + H(+) = agmatine + CO2. This Archaeoglobus fulgidus (strain ATCC 49558 / DSM 4304 / JCM 9628 / NBRC 100126 / VC-16) protein is Pyruvoyl-dependent arginine decarboxylase 1 (pdaD1).